The following is a 448-amino-acid chain: Beclin-1 (448 aa).

Residue M1 is modified to N-acetylmethionine. A phosphoserine mark is found at S14 and S29. Residues 47–72 (TTAQAKPGESQEEEANSGEEPFIETR) are disordered. Residues S88, S91, and S94 each carry the phosphoserine; by AMPK modification. The BH3 motif lies at 106–125 (TMENLSRRLKVTGDLFDIMS). An interaction with BCL2 and BCL2L1 isoform Bcl-X(L) region spans residues 110–157 (LSRRLKVTGDLFDIMSGQTDVDHPLCEECTDTLLDQLDTQLNVTENEC). Position 117 is a phosphothreonine; by DAPK1 (T117). Positions 140–267 (DTLLDQLDTQ…QLDKLKKTNV (128 aa)) form a coiled coil. The tract at residues 243-448 (DELKSVENQM…AWVSSQFYNK (206 aa)) is evolutionary conserved domain (ECD). Glycyl lysine isopeptide (Lys-Gly) (interchain with G-Cter in ubiquitin) cross-links involve residues K400 and K435. The interval 423-448 (WTKALKFMLTNLKWGLAWVSSQFYNK) is required for membrane-association.

The protein belongs to the beclin family. A homodimeric form is proposed to exist; this metastable form readily transits to ATG14- or UVRAG-containing complexes with BECN1:UVRAG being more stable than BECN1:ATG14. Component of the PI3K (PI3KC3/PI3K-III/class III phosphatidylinositol 3-kinase) complex the core of which is composed of the catalytic subunit PIK3C3, the regulatory subunit PIK3R4 and BECN1 associating with additional regulatory/auxiliary subunits to form alternative complex forms. Alternative complex forms containing a fourth regulatory subunit in a mutually exclusive manner are PI3K complex I (PI3KC3-C1) containing ATG14, and PI3K complex II (PI3KC3-C2) containing UVRAG. PI3KC3-C1 displays a V-shaped architecture with PIK3R4 serving as a bridge between PIK3C3 and the ATG14:BECN1 subcomplex. Both, PI3KC3-C1 and PI3KC3-C2, can associate with further regulatory subunits, such as RUBCN, SH3GLB1/Bif-1 and AMBRA1. PI3KC3-C1 probably associates with PIK3CB. Forms a complex with PPP2CA and AMBRA1; AMBRA1 and BECN1 components of the complex regulate MYC stability via different pathways. Component of the complex, at least composed of LRPPRC, BECN1 and BCL2; the interactions prevent BECN1 from forming an autophagy-inducing complex with PIK3C3. Interacts with AMBRA1, GOPC, GRID2. Interacts with BCL2 and BCL2L1 isoform Bcl-X(L); the interaction inhibits BECN1 function in promoting autophagy by interfering with the formation of the PI3K complex. Interacts with cytosolic HMGB1; inhibits the interaction of BECN1 and BCL2 leading to promotion of autophagy. Interacts with USP10, USP13, DAPK1, RAB39A. Interacts with SLAMF1. Interacts with the poly-Gln domain of ATXN3; the interaction causes deubiquitination at Lys-400 and stabilizes BECN1. Interacts with VMP1. Interacts with TRIM5; the interaction causes activation of BECN1 by causing its dissociation from its inhibitors BCL2 and TAB2. Interacts with active ULK1 (phosphorylated on 'Ser-317') and MEFV simultaneously. Interacts with WDR81 and WDR91; negatively regulates the PI3 kinase/PI3K activity associated with endosomal membranes. Interacts with LAPTM4B; competes with EGFR for LAPTM4B binding; regulates EGFR activity. Interacts with TRIM50. Interacts with TRIM16. Interacts with ATG14; this interaction is increased in the absence of TMEM39A. Interacts with WASHC1; preventing interaction with AMBRA1 and the DCX(AMBRA1) complex and subsequent ubiquitination. Interacts with TRIM17. Interacts with BCL2L10/BCL-B (via BH1 domain). Interacts with SH3BGRL. Interacts with IRGM; enhancing BECN1-interacting partners and influencing the composition of the BECN1 complex. Interacts with ARMC3. Interacts with LRPPRC. Post-translationally, phosphorylation at Thr-117 by DAPK1 reduces its interaction with BCL2 and BCL2L1 and promotes induction of autophagy. In response to autophagic stimuli, phosphorylated at serine residues by AMPK in an ATG14-dependent manner, and this phosphorylation is critical for maximally efficient autophagy. In terms of processing, polyubiquitinated by NEDD4, both with 'Lys-11'- and 'Lys-63'-linkages. 'Lys-11'-linked polyubiquitination leads to degradation and is enhanced when the stabilizing interaction partner VPS34 is depleted. Deubiquitinated by USP10 and USP13, leading to stabilize the PIK3C3/VPS34-containing complexes. Polyubiquitinated at Lys-400 with 'Lys-48'-linkages. 'Lys-48'-linked polyubiquitination of Lys-400 leads to degradation. Deubiquitinated by ATXN3, leading to stabilization. Ubiquitinated at Lys-435 via 'Lys-63'-linkage by the DCX(AMBRA1) complex, thereby increasing the association between BECN1 and PIK3C3 to promote PIK3C3 activity. 'Lys-48'-linked ubiquitination by RNF216 leads to proteasomal degradation and autophagy inhibition. Proteolytically processed by caspases including CASP8 and CASP3; the C-terminal fragments lack autophagy-inducing capacity and are proposed to induce apoptosis. Thus the cleavage is proposed to be an determinant to switch from autophagy to apoptosis pathways affecting cellular homeostasis including viral infections and survival of tumor cells.

It localises to the cytoplasm. The protein localises to the golgi apparatus. The protein resides in the trans-Golgi network membrane. It is found in the endosome membrane. Its subcellular location is the endoplasmic reticulum membrane. It localises to the mitochondrion membrane. The protein localises to the cytoplasmic vesicle. The protein resides in the autophagosome. It is found in the mitochondrion. Its subcellular location is the nucleus. Functionally, plays a central role in autophagy. Acts as a core subunit of the PI3K complex that mediates formation of phosphatidylinositol 3-phosphate; different complex forms are believed to play a role in multiple membrane trafficking pathways: PI3KC3-C1 is involved in initiation of autophagosomes and PI3KC3-C2 in maturation of autophagosomes and endocytosis. Involved in regulation of degradative endocytic trafficking and required for the abscission step in cytokinesis, probably in the context of PI3KC3-C2. Essential for the formation of PI3KC3-C2 but not PI3KC3-C1 PI3K complex forms. Involved in endocytosis. May play a role in antiviral host defense. In terms of biological role, beclin-1-C 35 kDa localized to mitochondria can promote apoptosis; it induces the mitochondrial translocation of BAX and the release of proapoptotic factors. The sequence is that of Beclin-1 (Becn1) from Rattus norvegicus (Rat).